A 324-amino-acid chain; its full sequence is Elongation factor Ts, mitochondrial (324 aa).

Residues 1–44 constitute a mitochondrion transit peptide; that stretch reads MSLLRSLRFFPVACTGRSARAVLLQPSQPWLTFHAGPSLSSAAS. N6-succinyllysine occurs at positions 75, 132, and 191. S269 bears the Phosphoserine mark.

It belongs to the EF-Ts family.

The protein resides in the mitochondrion. Its function is as follows. Associates with the EF-Tu.GDP complex and induces the exchange of GDP to GTP. It remains bound to the aminoacyl-tRNA.EF-Tu.GTP complex up to the GTP hydrolysis stage on the ribosome. The protein is Elongation factor Ts, mitochondrial (Tsfm) of Mus musculus (Mouse).